The following is a 906-amino-acid chain: MGRYWLLPGLLLSLPLVTGWSTSNCLVTEGSRLPLVSRYFTFCRHSKLSFLAACLSVSNLTQTLEVVPRTVEGLCLGGTVSTLLPDAFSAFPGLKVLALSLHLTQLLPGALRGLGQLQSLSFFDSPLRRSLFLPPDAFSDLISLQRLHISGPCLDKKAGIRLPPGLQWLGVTLSCIQDVGELAGMFPDLVQGSSSRVSWTLQKLDLSSNWKLKMASPGSLQGLQVEILDLTRTPLDAVWLKGLGLQKLDVLYAQTATAELAAEAVAHFELQGLIVKESKIGSISQEALASCHSLKTLGLSSTGLTKLPPGFLTAMPRLQRLELSGNQLQSAVLCMNETGDVSGLTTLDLSGNRLRILPPAAFSCLPHLRELLLRYNQLLSLEGYLFQELQQLETLKLDGNPLLHLGKNWLAALPALTTLSLLDTQIRMSPEPGFWGAKNLHTLSLKLPALPAPAVLFLPMYLTSLELHIASGTTEHWTLSPAIFPSLETLTISGGGLKLKLGSQNASGVFPALQKLSLLKNSLDAFCSQGTSNLFLWQLPKLQSLRVWGAGNSSRPCLITGLPSLRELKLASLQSITQPRSVQLEELVGDLPQLQALVLSSTGLKSLSAAAFQRLHSLQVLVLEYEKDLMLQDSLREYSPQMPHYIYILESNLACHCANAWMEPWVKRSTKTYIYIRDNRLCPGQDRLSARGSLPSFLWDHCPQTLELKLFLASSALVFMLIALPLLQEARNSWIPYLQALFRVWLQGLRGKGDKGKRFLFDVFVSHCRQDQGWVIEELLPALEGFLPAGLGLRLCLPERDFEPGKDVVDNVVDSMLSSRTTLCVLSGQALCNPRCRLELRLATSLLLAAPSPPVLLLVFLEPISRHQLPGYHRLARLLRRGDYCLWPEEEERKSGFWTWLRSRLG.

Positions 1 to 21 are cleaved as a signal peptide; it reads MGRYWLLPGLLLSLPLVTGWS. Residues 22 to 709 lie on the Extracellular side of the membrane; sequence TSNCLVTEGS…DHCPQTLELK (688 aa). Residue Asn59 is glycosylated (N-linked (GlcNAc...) asparagine). LRR repeat units follow at residues 91 to 114, 115 to 140, 142 to 170, 198 to 222, 224 to 247, 267 to 290, 291 to 314, 316 to 338, 341 to 364, 366 to 388, 389 to 412, 414 to 436, 462 to 484, 485 to 508, and 510 to 533; these read FPGL…LRGL, GQLQ…AFSD, ISLQ…QWLG, SWTL…SLQG, QVEI…GLQK, HFEL…ALAS, CHSL…FLTA, PRLQ…MNET, VSGL…AFSC, PHLR…LFQE, LQQL…WLAA, PALT…GFWG, LTSL…PAIF, PSLE…NASG, and FPAL…GTSN. Asn336 carries N-linked (GlcNAc...) asparagine glycosylation. N-linked (GlcNAc...) asparagine glycosylation occurs at Asn505. A glycan (N-linked (GlcNAc...) asparagine) is linked at Asn552. 2 LRR repeats span residues 562-586 and 591-614; these read LPSL…QLEE and LPQL…AFQR. The helical transmembrane segment at 710-730 threads the bilayer; that stretch reads LFLASSALVFMLIALPLLQEA. Residues 731–906 are Cytoplasmic-facing; it reads RNSWIPYLQA…FWTWLRSRLG (176 aa). Residues 759-905 form the TIR domain; the sequence is FLFDVFVSHC…GFWTWLRSRL (147 aa).

Belongs to the Toll-like receptor family. Binds MYD88 via their respective TIR domains. As to expression, macrophages, liver, kidney and bladder epithelial cells.

It localises to the membrane. In terms of biological role, participates in the innate immune response to microbial agents. Acts via MYD88 and TRAF6, leading to NF-kappa-B activation, cytokine secretion and the inflammatory response. Plays a role in preventing infection of internal organs of the urogenital system. The polypeptide is Toll-like receptor 12 (Mus musculus (Mouse)).